The following is a 242-amino-acid chain: Adapter protein MecA (242 aa).

Belongs to the MecA family. In terms of assembly, homodimer.

In terms of biological role, enables the recognition and targeting of unfolded and aggregated proteins to the ClpC protease or to other proteins involved in proteolysis. The chain is Adapter protein MecA from Streptococcus gordonii (strain Challis / ATCC 35105 / BCRC 15272 / CH1 / DL1 / V288).